The sequence spans 191 residues: Xanthine phosphoribosyltransferase (191 aa).

2 residues coordinate xanthine: Leu-20 and Asn-27. Residue 128 to 132 (ANGQA) participates in 5-phospho-alpha-D-ribose 1-diphosphate binding. Xanthine is bound at residue Lys-156.

The protein belongs to the purine/pyrimidine phosphoribosyltransferase family. Xpt subfamily. As to quaternary structure, homodimer.

The protein resides in the cytoplasm. The catalysed reaction is XMP + diphosphate = xanthine + 5-phospho-alpha-D-ribose 1-diphosphate. It functions in the pathway purine metabolism; XMP biosynthesis via salvage pathway; XMP from xanthine: step 1/1. Converts the preformed base xanthine, a product of nucleic acid breakdown, to xanthosine 5'-monophosphate (XMP), so it can be reused for RNA or DNA synthesis. The sequence is that of Xanthine phosphoribosyltransferase from Acinetobacter baylyi (strain ATCC 33305 / BD413 / ADP1).